Consider the following 186-residue polypeptide: Testis-expressed protein 36 (186 aa).

Residues 1–52 (MTKGRRFNPPSDKDGRWFPHIGLTQKTPESITSATSKEPQSPHLPRQAEGKL) are disordered. Residues 24-39 (TQKTPESITSATSKEP) are compositionally biased toward polar residues.

The protein is Testis-expressed protein 36 (TEX36) of Homo sapiens (Human).